The sequence spans 494 residues: Probable terminase, large subunit (494 aa).

26–33 lines the ATP pocket; it reads ADVLFGKT. The short motif at 56-63 is the Walker A motif element; sequence SGHGTGKS. Positions 158–163 match the Walker B motif motif; it reads LYIIDE. Glu-163 functions as the For ATPase activity in the catalytic mechanism. Mg(2+) is bound by residues Asp-293, Asp-356, and Asp-446.

Belongs to the punalikevirus large terminase family. As to quaternary structure, interacts with pacA protein. Mg(2+) is required as a cofactor.

In terms of biological role, component of the molecular motor that translocates genomic DNA in empty capsid during DNA packaging. Heterooligomerize with small terminase protein to be docked on capsid portal protein. Forms a ring-like structure through which genomic DNA is translocated into the capsid. May have or induce an endonuclease activity to cleave the genome concatemer after encapsidation. The polypeptide is Probable terminase, large subunit (pacB) (Escherichia coli (Bacteriophage P7)).